An 812-amino-acid chain; its full sequence is Ribonucleoside-diphosphate reductase large subunit (812 aa).

Residues 12–103 form the ATP-cone domain; the sequence is LYVIKRDGRQ…VSNLHKETKK (92 aa). ATP-binding positions include 16-17, 22-28, threonine 64, and aspartate 68; these read KR and EEVHFDK. Positions 213 and 228 each coordinate GDP. Cysteine 229 and cysteine 455 form a disulfide bridge. Residues 237-239, lysine 254, arginine 267, and 274-275 contribute to the dTTP site; these read DSI and CG. Position 438 (asparagine 438) interacts with GDP. Asparagine 438 acts as the Proton acceptor in catalysis. The active-site Cysteine radical intermediate is the cysteine 440. Residues glutamate 442 and 615–618 contribute to the GDP site; that span reads TAST. The Proton acceptor role is filled by glutamate 442. Threonine 778 carries the phosphothreonine modification. Residue serine 782 is modified to Phosphoserine. Tyrosine 786 bears the Phosphotyrosine mark.

The protein belongs to the ribonucleoside diphosphate reductase large chain family. As to quaternary structure, heterodimer of a large and a small subunit.

The catalysed reaction is a 2'-deoxyribonucleoside 5'-diphosphate + [thioredoxin]-disulfide + H2O = a ribonucleoside 5'-diphosphate + [thioredoxin]-dithiol. With respect to regulation, under complex allosteric control mediated by deoxynucleoside triphosphates and ATP binding to separate specificity and activation sites on the M1 subunit. The type of nucleotide bound at the specificity site determines substrate preference. It seems probable that ATP makes the enzyme reduce CDP and UDP, dGTP favors ADP reduction and dTTP favors GDP reduction. Stimulated by ATP and inhibited by dATP binding to the activity site. Functionally, provides the precursors necessary for DNA synthesis. Catalyzes the biosynthesis of deoxyribonucleotides from the corresponding ribonucleotides. The chain is Ribonucleoside-diphosphate reductase large subunit (RnrL) from Drosophila melanogaster (Fruit fly).